The sequence spans 608 residues: Pentatricopeptide repeat-containing protein At5g40410, mitochondrial (608 aa).

The N-terminal 28 residues, 1 to 28, are a transit peptide targeting the mitochondrion; it reads MIKANVYSCSKFRFLYRRRFLSQSSFVH. 11 PPR repeats span residues 30–64, 65–95, 96–130, 133–167, 168–198, 199–233, 234–268, 269–299, 300–334, 335–365, and 371–401; these read LDANVSSLIAAVKSCVSIELCRLLHCKVVKSVSYR, HGFIGDQLVGCYLRLGHDVCAEKLFDEMPER, DLVSWNSLISGYSGRGYLGKCFEVLSRMMISEVGF, NEVTFLSMISACVYGGSKEEGRCIHGLVMKFGVLE, EVKVVNAFINWYGKTGDLTSSCKLFEDLSIK, NLVSWNTMIVIHLQNGLAEKGLAYFNMSRRVGHEP, DQATFLAVLRSCEDMGVVRLAQGIHGLIMFGGFSG, NKCITTALLDLYSKLGRLEDSSTVFHEITSP, DSMAWTAMLAAYATHGFGRDAIKHFELMVHYGISP, DHVTFTHLLNACSHSGLVEEGKHYFETMSKR, and RLDHYSCMVDLLGRSGLLQDAYGLIKEMPME. Residues 406 to 481 form a type E motif region; that stretch reads VWGALLGACR…ASGCSYIEHG (76 aa). Positions 482–512 are type E(+) motif; sequence NKIHKFVVGDWSHPESEKIQKKLKEIRKKMK. The segment at 514 to 608 is type DYW motif; that stretch reads EMGYKSKTEF…DGSCSCSDYW (95 aa).

This sequence belongs to the PPR family. PCMP-H subfamily.

It is found in the mitochondrion. This chain is Pentatricopeptide repeat-containing protein At5g40410, mitochondrial (PCMP-H15), found in Arabidopsis thaliana (Mouse-ear cress).